The sequence spans 461 residues: Cysteine--tRNA ligase (461 aa).

Cys28 provides a ligand contact to Zn(2+). The short motif at Ile30–His40 is the 'HIGH' region element. Cys209, His234, and Glu238 together coordinate Zn(2+). The 'KMSKS' region signature appears at Lys266–Ser270. Lys269 lines the ATP pocket.

The protein belongs to the class-I aminoacyl-tRNA synthetase family. In terms of assembly, monomer. Zn(2+) serves as cofactor.

Its subcellular location is the cytoplasm. It catalyses the reaction tRNA(Cys) + L-cysteine + ATP = L-cysteinyl-tRNA(Cys) + AMP + diphosphate. The polypeptide is Cysteine--tRNA ligase (Escherichia coli O127:H6 (strain E2348/69 / EPEC)).